A 200-amino-acid chain; its full sequence is Alpha/beta-tubulin-N-acetyltransferase 9 (200 aa).

An N-acetyltransferase domain is found at 34-181; sequence ETLRELTASE…HEVTLERPIT (148 aa).

It belongs to the acetyltransferase family. GNAT subfamily. As to quaternary structure, interacts with microtubules as well as alpha/beta-tubulin heterodimers.

It localises to the nucleus. Its subcellular location is the cytoplasm. The protein localises to the cytoskeleton. The protein resides in the spindle. It is found in the spindle pole. It carries out the reaction N-terminal L-methionyl-[tubulin] + acetyl-CoA = N-terminal N(alpha)-acetyl-L-methionyl-[tubulin] + CoA + H(+). Its function is as follows. N-acetyltransferase that mediates the acetylation of the N-terminal residues of alpha- and beta-tubulin. Required for microtubule stability and inhibition of JNK signaling to promote cell survival during development, possibly acting independently of its N-acetyltransferase activity. Necessary for the stabilization of spindle microtubules and for mitosis progression. Regulates microtubule stability by inhibiting Spastin-mediated depolymerization and promoting Eb1-mediated polymerization. The sequence is that of Alpha/beta-tubulin-N-acetyltransferase 9 from Drosophila melanogaster (Fruit fly).